The chain runs to 327 residues: Aspartate--ammonia ligase (327 aa).

This sequence belongs to the class-II aminoacyl-tRNA synthetase family. AsnA subfamily.

The protein localises to the cytoplasm. The enzyme catalyses L-aspartate + NH4(+) + ATP = L-asparagine + AMP + diphosphate + H(+). It functions in the pathway amino-acid biosynthesis; L-asparagine biosynthesis; L-asparagine from L-aspartate (ammonia route): step 1/1. This chain is Aspartate--ammonia ligase, found in Bacillus cereus (strain B4264).